The following is a 483-amino-acid chain: Docking protein 1 (483 aa).

At Met1 the chain carries N-acetylmethionine. In terms of domain architecture, PH spans 4–119 (AVMEGPLFLQ…WVQTLCQNAF (116 aa)). At Ser48 the chain carries Phosphoserine. Residues 151–259 (EGSQFWVTVQ…HRQKIQGKAG (109 aa)) enclose the IRS-type PTB domain. Ser269 and Ser291 each carry phosphoserine. A disordered region spans residues 293–326 (PALYSEPLDSLRIPPGPSQDSLYSDPLDSTPARA). Tyr296, Tyr337, Tyr362, Tyr377, Tyr398, and Tyr409 each carry phosphotyrosine. The disordered stretch occupies residues 409–483 (YAVPPPRSTK…RTGAKSEGST (75 aa)). The span at 411–424 (VPPPRSTKPFPAPK) shows a compositional bias: pro residues. A Phosphoserine modification is found at Ser416. Residues 434 to 460 (GAATGSGSQGHSSDTALYSQVQKSGAS) are compositionally biased toward polar residues. Tyr451 is subject to Phosphotyrosine. Residue Ser462 is modified to Phosphoserine.

The protein belongs to the DOK family. Type A subfamily. In terms of assembly, interacts with RasGAP, INPP5D/SHIP1 and ABL1. Interacts directly with phosphorylated ITGB3. Interacts with SRMS (via the SH2 and SH3 domains). Constitutively tyrosine-phosphorylated. Phosphorylated by TEC. Phosphorylated by LYN. Phosphorylated on tyrosine residues by the insulin receptor kinase. Results in the negative regulation of the insulin signaling pathway. Phosphorylated on tyrosine residues by SRMS.

It localises to the cytoplasm. The protein resides in the nucleus. DOK proteins are enzymatically inert adaptor or scaffolding proteins. They provide a docking platform for the assembly of multimolecular signaling complexes. DOK1 appears to be a negative regulator of the insulin signaling pathway. Modulates integrin activation by competing with talin for the same binding site on ITGB3. The sequence is that of Docking protein 1 (DOK1) from Bos taurus (Bovine).